Here is a 209-residue protein sequence, read N- to C-terminus: MTTLASSIEHKTKHLAAPFENDENTWMKKYCCQCKSCKMSVPVQPWLPRFFVFGILCPVFWLVNLLAWWFLQYWQPHELEFHDLQEDEYPGFYEYEAITKRTVIPLKEEVLQEIRVMQNFSDSNSEEYYESKDGMPSSFLNVNTEQVEDENDTLKKYRYAFLKKVAHDVLESHDLLRKTFRNWNLRSLLGLLIDSILIIFVVLLCKKSR.

Topologically, residues 1 to 49 are lumenal; that stretch reads MTTLASSIEHKTKHLAAPFENDENTWMKKYCCQCKSCKMSVPVQPWLPR. A helical membrane pass occupies residues 50 to 70; sequence FFVFGILCPVFWLVNLLAWWF. The Cytoplasmic portion of the chain corresponds to 71 to 184; that stretch reads LQYWQPHELE…LLRKTFRNWN (114 aa). Serine 121, serine 123, and serine 125 each carry phosphoserine. At threonine 153 the chain carries Phosphothreonine. A helical transmembrane segment spans residues 185-205; that stretch reads LRSLLGLLIDSILIIFVVLLC. The Lumenal portion of the chain corresponds to 206-209; it reads KKSR.

The protein localises to the endomembrane system. Its function is as follows. Required for receptor inhibition of inappropriately expressed a-factor receptor (STE3) in MAT a cells. Inhibits signaling by relocalizing the G protein beta-gamma (STE4-STE18) subunit to intracellular membranes. May also be a mechanism for the down-regulation of the mating pheromone response after the zygotic fusion event, promoting the transition of the new diploid cell to vegetative growth. This chain is Protein ASG7 (ASG7), found in Saccharomyces cerevisiae (strain YJM789) (Baker's yeast).